The primary structure comprises 326 residues: Apolipoprotein F (326 aa).

Positions 1 to 35 (MTGLCGYSAPDMRGLRLIMIPVELLLCYLLLHPVD) are cleaved as a signal peptide. Positions 36–164 (ATSYGKQTNV…EQQSTGRVGR (129 aa)) are excised as a propeptide. N-linked (GlcNAc...) asparagine glycosylation occurs at Asn-118. Thr-274 carries O-linked (GalNAc...) threonine glycosylation. Phosphoserine is present on Ser-323.

It belongs to the apolipoprotein F family. O-glycosylated with core 1 or possibly core 8 glycans. In terms of tissue distribution, expressed by the liver and secreted in plasma.

The protein resides in the secreted. Its function is as follows. Minor apolipoprotein that associates with LDL. Inhibits cholesteryl ester transfer protein (CETP) activity and appears to be an important regulator of cholesterol transport. Also associates to a lesser degree with VLDL, Apo-AI and Apo-AII. This Homo sapiens (Human) protein is Apolipoprotein F (APOF).